The chain runs to 186 residues: Ribosomal RNA small subunit methyltransferase G (186 aa).

Residues Gly59, Phe64, 110–111, and Arg124 each bind S-adenosyl-L-methionine; that span reads IE.

The protein belongs to the methyltransferase superfamily. RNA methyltransferase RsmG family.

The protein localises to the cytoplasm. The enzyme catalyses guanosine(527) in 16S rRNA + S-adenosyl-L-methionine = N(7)-methylguanosine(527) in 16S rRNA + S-adenosyl-L-homocysteine. Functionally, specifically methylates the N7 position of guanine in position 527 of 16S rRNA. In Campylobacter curvus (strain 525.92), this protein is Ribosomal RNA small subunit methyltransferase G.